The following is a 486-amino-acid chain: Corytuberine synthase (486 aa).

A helical membrane pass occupies residues 6 to 21; that stretch reads ALFSLIPVILVFILLL. A heme-binding site is contributed by Cys-428.

It belongs to the cytochrome P450 family. Requires heme as cofactor.

Its subcellular location is the endoplasmic reticulum membrane. It carries out the reaction (S)-reticuline + reduced [NADPH--hemoprotein reductase] + O2 = (S)-corytuberine + oxidized [NADPH--hemoprotein reductase] + 2 H2O + 2 H(+). With respect to regulation, inhibited by ketoconazole. Its function is as follows. Cytochrome P450 that catalyzes an intramolecular C-C phenol coupling of (S)-reticuline in magnoflorine biosynthesis. Catalyzes the formation of (S)-corytuberine from (S)-reticuline, and also, with a lover efficiency, the 4'-O-demethylation of codamine to produce orientaline, and subsequent C-C-phenol coupling of orientaline. Can also use (R,S)-norreticuline, (R,S)-orientaline, (S)-N-methylcoclaurine and (S)-coclaurine as substrates, but not (R,S)-6-O-methyllaudanosoline, (R,S)-6-O-methylnorlaudanosoline, (R,S)-laudanine, (R,S)-norlaudanine, (R,S)-4'-O-methyllaudanosoline, (R,S)-pseudocodamine, (R,S)-norpseudocodamine, (R,S)-laudanosine, (R,S)-norlaudanosine, (R,S)-laudanosoline or (R,S)-norlaudanosoline. The chain is Corytuberine synthase from Coptis japonica (Japanese goldthread).